The sequence spans 281 residues: MDTLLFVLKSIVLGIVEGVTEFLPISSTGHLIIFENIMGFKSASPNYVKMYTYVIQLGAIMAVVLLYWKKIKETVINFFPGKVGYEKSGFKFWFMIFIACIPGAAVKLLLDAPVEKYLMTPVSVAIVLILGGLWMIYAEKKFRNNNLGKQKLSVTPKQALIIGAFQCLAIIPGMSRSASTIIGGWVAGLSTVVAAEFSFFLAIPVMFGYSLLEIIRIGGLTSLPAAELISLVVGFIVAFIVAVAVISQFISYLKRKPLKSFAIYRMIFAVIVLIAGFMGFF.

Helical transmembrane passes span 5–25 (LFVLKSIVLGIVEGVTEFLPI), 48–68 (VKMYTYVIQLGAIMAVVLLYW), 92–112 (FWFMIFIACIPGAAVKLLLDA), 118–138 (LMTPVSVAIVLILGGLWMIYA), 154–174 (VTPKQALIIGAFQCLAIIPGM), 192–212 (VVAAEFSFFLAIPVMFGYSLL), 226–246 (AELISLVVGFIVAFIVAVAVI), and 261–281 (FAIYRMIFAVIVLIAGFMGFF).

The protein belongs to the UppP family.

It is found in the cell membrane. It catalyses the reaction di-trans,octa-cis-undecaprenyl diphosphate + H2O = di-trans,octa-cis-undecaprenyl phosphate + phosphate + H(+). Catalyzes the dephosphorylation of undecaprenyl diphosphate (UPP). Confers resistance to bacitracin. This is Undecaprenyl-diphosphatase from Ruminiclostridium cellulolyticum (strain ATCC 35319 / DSM 5812 / JCM 6584 / H10) (Clostridium cellulolyticum).